The sequence spans 193 residues: Cysteine and glycine-rich protein 1 (193 aa).

The LIM zinc-binding 1 domain occupies 10–61 (CGVCQKTVYFAEEVQCEGNSFHKSCFLCMVCKKNLDSTTVAVHGEEIYCKSC). A Nuclear localization signal motif is present at residues 64–69 (KKYGPK). Position 81 is a phosphoserine (serine 81). Residue lysine 84 is modified to N6-acetyllysine. Lysine 91 is covalently cross-linked (Glycyl lysine isopeptide (Lys-Gly) (interchain with G-Cter in SUMO2)). Residues lysine 112, lysine 131, lysine 137, and lysine 161 each carry the N6-acetyllysine modification. The 52-residue stretch at 119–170 (CPRCSQAVYAAEKVIGAGKSWHKSCFRCAKCGKGLESTTLADKDGEIYCKGC) folds into the LIM zinc-binding 2 domain. Residue serine 192 is modified to Phosphoserine.

As to quaternary structure, interacts with ASCC1; ASCC2 and TRIP4.

Its subcellular location is the nucleus. Its function is as follows. Could play a role in neuronal development. This is Cysteine and glycine-rich protein 1 (Csrp1) from Mus musculus (Mouse).